A 292-amino-acid polypeptide reads, in one-letter code: Ribosomal RNA small subunit methyltransferase A (292 aa).

S-adenosyl-L-methionine contacts are provided by Asn29, Leu31, Gly56, Glu77, Asp102, and Asn127.

This sequence belongs to the class I-like SAM-binding methyltransferase superfamily. rRNA adenine N(6)-methyltransferase family. RsmA subfamily.

It is found in the cytoplasm. It catalyses the reaction adenosine(1518)/adenosine(1519) in 16S rRNA + 4 S-adenosyl-L-methionine = N(6)-dimethyladenosine(1518)/N(6)-dimethyladenosine(1519) in 16S rRNA + 4 S-adenosyl-L-homocysteine + 4 H(+). Its function is as follows. Specifically dimethylates two adjacent adenosines (A1518 and A1519) in the loop of a conserved hairpin near the 3'-end of 16S rRNA in the 30S particle. May play a critical role in biogenesis of 30S subunits. The sequence is that of Ribosomal RNA small subunit methyltransferase A from Bacillus licheniformis (strain ATCC 14580 / DSM 13 / JCM 2505 / CCUG 7422 / NBRC 12200 / NCIMB 9375 / NCTC 10341 / NRRL NRS-1264 / Gibson 46).